Consider the following 356-residue polypeptide: Nuclear hormone receptor family member nhr-169 (356 aa).

Positions 16–90 (DPICSVCNFS…AGMKRSLVKE (75 aa)) form a DNA-binding region, nuclear receptor. 2 consecutive NR C4-type zinc fingers follow at residues 19 to 40 (CSVC…CSAC) and 56 to 72 (CKKD…CRAC). Residues 144–356 (DVSKILKTTP…KLYLHMGLPF (213 aa)) form the NR LBD domain.

It belongs to the nuclear hormone receptor family.

Its subcellular location is the nucleus. Its function is as follows. Orphan nuclear receptor. This is Nuclear hormone receptor family member nhr-169 (nhr-169) from Caenorhabditis elegans.